The chain runs to 457 residues: SH3 domain-binding protein 5 (457 aa).

The segment covering 1 to 12 (MDTALKRSRSEE) has biased composition (basic and acidic residues). Positions 1 to 68 (MDTALKRSRS…DDINRRETEL (68 aa)) are disordered. Over residues 25-43 (EKEEEEERMEQGLEEEEEV) the composition is skewed to acidic residues. Residues 33 to 267 (MEQGLEEEEE…EIHERRRSNA (235 aa)) are sufficient for interaction with RAB11A and for guanine nucleotide exchange activity. Residues 44 to 53 (DPRIQGELEK) show a composition bias toward basic and acidic residues. Coiled-coil stretches lie at residues 46–92 (RIQG…LAKK), 99–147 (DSKP…RLLE), 156–202 (AWQE…LEKK), and 213–257 (YFEL…RISD). Residues 308–319 (NCGNLVSEDDSE) are compositionally biased toward acidic residues. Residues 308-347 (NCGNLVSEDDSETQSVSSFSSGPTSPSEMPDQFPAVARPG) form a disordered region. Residues 322–334 (SVSSFSSGPTSPS) are compositionally biased toward low complexity. The residue at position 353 (Ser-353) is a Phosphoserine; by MAPK12 and MAPK9. Residues 371-427 (SECSGASSPECEVERGDRAEGAENKMSDKANNNRVLSSTSAGGGRSRSQSSTSLEGQ) are disordered. Phosphoserine is present on residues Ser-377 and Ser-378. The span at 382 to 398 (EVERGDRAEGAENKMSD) shows a compositional bias: basic and acidic residues. The span at 406 to 427 (LSSTSAGGGRSRSQSSTSLEGQ) shows a compositional bias: low complexity. Ser-420 carries the post-translational modification Phosphoserine. Residue Ser-423 is modified to Phosphoserine; by MAPK12.

It belongs to the SH3BP5 family. In terms of assembly, interacts with BTK. Interacts with all isoforms of MAPK8, MAPK9, MAPK10 and MAPK12. Interacts with GDP-bound and nucleotide-free forms of RAB11A.

It is found in the cytoplasmic vesicle membrane. The protein localises to the mitochondrion. In terms of biological role, functions as a guanine nucleotide exchange factor (GEF) with specificity for RAB11A and RAB25. Inhibits the auto- and transphosphorylation activity of BTK. Plays a negative regulatory role in BTK-related cytoplasmic signaling in B-cells. May be involved in BCR-induced apoptotic cell death. The chain is SH3 domain-binding protein 5 (Sh3bp5) from Rattus norvegicus (Rat).